The chain runs to 559 residues: MKGELLCVLLLCGVAFTLPDQGIHRRFRRGARSYRATCRDEQTQTTYQQHQSWLRPMLRGNRVEYCRCNSGLAQCHSVPVRSCSEPRCFNGGTCQQALYFSDFVCQCPDGFVGKRCDIDTRATCFEGQGITYRGTWSTAENGAECINWNSSALSQKPYSARRPNAIKLGLGNHNYCRNPDRDVKPWCYVFKAGKYTTEFCSTPACPKGPTEDCYVGKGVTYRGTHSFTTSKASCLPWNSMILIGKTYTAWRANSQALGLGRHNYCRNPDGDAKPWCHVMKDRKLTWEYCDMSPCSTCGLRQYKQPQFRIKGGLFTDITSHPWQAAIFVKNKRSPGERFLCGGVLISSCWVLSAAHCFVERFPPHHLKVVLGRTYRVVPGEEEQTFEIEKYIVHKEFDDDTYDNDIALLQLRSDSSQCAQESSSVGTACLPDPDVQLPDWTECELSGYGKHEASSPFFSDRLKEAHVRLYPSSRCTSQHLFNKTITSNMLCAGDTRTGGNQDVHDACQGDSGGPLVCMIDKRMTLLGIISWGLGCGQKDVPGIYTKVTNYLNWIQDNMKQ.

A signal peptide spans 1 to 17 (MKGELLCVLLLCGVAFT). A propeptide spanning residues 18–29 (LPDQGIHRRFRR) is cleaved from the precursor. A propeptide spans 30–32 (GAR) (removed by plasmin). In terms of domain architecture, Fibronectin type-I spans 36-78 (ATCRDEQTQTTYQQHQSWLRPMLRGNRVEYCRCNSGLAQCHSV). Cystine bridges form between C38–C68, C66–C75, C83–C94, C88–C105, C107–C116, C124–C205, C145–C187, C176–C200, C213–C294, C234–C276, C265–C289, C297–C428, C340–C356, C348–C417, C442–C516, C474–C490, and C506–C534. Residues 39 to 49 (RDEQTQTTYQQ) are important for binding to annexin A2. The EGF-like domain maps to 79 to 117 (PVRSCSEPRCFNGGTCQQALYFSDFVCQCPDGFVGKRCD). Kringle domains are found at residues 124 to 205 (CFEG…TPAC) and 213 to 294 (CYVG…MSPC). Residue N149 is glycosylated (N-linked (GlcNAc...) asparagine). Positions 309-558 (IKGGLFTDIT…YLNWIQDNMK (250 aa)) constitute a Peptidase S1 domain. Active-site charge relay system residues include H355 and D404. N481 carries N-linked (GlcNAc...) asparagine glycosylation. The active-site Charge relay system is S510.

This sequence belongs to the peptidase S1 family. As to quaternary structure, heterodimer of chain A and chain B held by a disulfide bond. Binds to fibrin with high affinity. This interaction leads to an increase in the catalytic efficiency of the enzyme due to an increase in affinity for plasminogen. Similarly, binding to heparin increases the activation of plasminogen. Binds to annexin A2, cytokeratin-8, fibronectin and laminin. Binds to mannose receptor and the low-density lipoprotein receptor-related protein (LRP1); these proteins are involved in TPA clearance. Binds LRP1B; binding is followed by internalization and degradation. Forms heterodimer with SERPINA5. Interacts with SERPINE1. In complex with SERPINE1, interacts with SORL1. Post-translationally, the single chain, almost fully active enzyme, can be further processed into a two-chain fully active form by a cleavage after Arg-308 catalyzed by plasmin, tissue kallikrein or factor Xa.

Its subcellular location is the secreted. The protein resides in the extracellular space. It carries out the reaction Specific cleavage of Arg-|-Val bond in plasminogen to form plasmin.. Its activity is regulated as follows. Inhibited by SERPINA5. Inhibited by SERPINE1. In terms of biological role, converts the abundant, but inactive, zymogen plasminogen to plasmin by hydrolyzing a single Arg-Val bond in plasminogen. By controlling plasmin-mediated proteolysis, it plays an important role in tissue remodeling and degradation, in cell migration and many other physiopathological events. During oocyte activation, plays a role in cortical granule reaction in the zona reaction, which contributes to the block to polyspermy. The chain is Tissue-type plasminogen activator (Plat) from Rattus norvegicus (Rat).